A 357-amino-acid chain; its full sequence is DNA replication and repair protein RecF (357 aa).

An ATP-binding site is contributed by 30–37; that stretch reads GANGSGKT.

The protein belongs to the RecF family.

It is found in the cytoplasm. The RecF protein is involved in DNA metabolism; it is required for DNA replication and normal SOS inducibility. RecF binds preferentially to single-stranded, linear DNA. It also seems to bind ATP. The protein is DNA replication and repair protein RecF of Salmonella paratyphi B (strain ATCC BAA-1250 / SPB7).